A 1126-amino-acid chain; its full sequence is Translation initiation factor IF-2 (1126 aa).

The interval Leu-63 to Ala-519 is disordered. Positions Ile-70–Ser-83 are enriched in basic and acidic residues. The segment covering Pro-93–Pro-111 has biased composition (low complexity). Residues Lys-116–Asn-151 are compositionally biased toward polar residues. Positions Thr-161–Pro-171 are enriched in pro residues. Positions Asn-181–Ile-195 are enriched in polar residues. 2 stretches are compositionally biased toward low complexity: residues Asn-211–Lys-224 and Ile-240–Asn-252. Residues Ala-254–Gly-264 show a composition bias toward polar residues. Composition is skewed to low complexity over residues Asn-291–Asn-315 and Asn-327–Gly-349. The span at Gly-429–Arg-443 shows a compositional bias: basic and acidic residues. The span at Lys-501–Arg-517 shows a compositional bias: basic residues. The tr-type G domain maps to Arg-618 to Leu-790. The segment at Gly-627–Thr-634 is G1. Gly-627–Thr-634 lines the GTP pocket. Residues Gly-652–His-656 form a G2 region. Residues Asp-677–Gly-680 are G3. Residues Asp-677–His-681 and Asn-731–Asp-734 each bind GTP. The interval Asn-731–Asp-734 is G4. The segment at Ser-767–Ile-769 is G5.

This sequence belongs to the TRAFAC class translation factor GTPase superfamily. Classic translation factor GTPase family. IF-2 subfamily.

The protein resides in the cytoplasm. One of the essential components for the initiation of protein synthesis. Protects formylmethionyl-tRNA from spontaneous hydrolysis and promotes its binding to the 30S ribosomal subunits. Also involved in the hydrolysis of GTP during the formation of the 70S ribosomal complex. The protein is Translation initiation factor IF-2 of Prochlorococcus marinus (strain AS9601).